Consider the following 134-residue polypeptide: Putative STAG3-like protein 2 (134 aa).

Positions P10–M95 constitute an SCD domain.

Belongs to the SCC3 family.

It localises to the nucleus. This Homo sapiens (Human) protein is Putative STAG3-like protein 2 (STAG3L2).